The chain runs to 174 residues: Ribosome rescue factor SmrB (174 aa).

The 76-residue stretch at 96 to 171 folds into the Smr domain; the sequence is LDLHGMNQQQ…GDSAILVLLD (76 aa).

The protein belongs to the SmrB family. As to quaternary structure, associates with collided ribosomes, but not with correctly translating polysomes.

In terms of biological role, acts as a ribosome collision sensor. Detects stalled/collided disomes (pairs of ribosomes where the leading ribosome is stalled and a second ribosome has collided with it) and endonucleolytically cleaves mRNA at the 5' boundary of the stalled ribosome. Stalled/collided disomes form a new interface (primarily via the 30S subunits) that binds SmrB. Cleaved mRNA becomes available for tmRNA ligation, leading to ribosomal subunit dissociation and rescue of stalled ribosomes. The sequence is that of Ribosome rescue factor SmrB from Aeromonas hydrophila subsp. hydrophila (strain ATCC 7966 / DSM 30187 / BCRC 13018 / CCUG 14551 / JCM 1027 / KCTC 2358 / NCIMB 9240 / NCTC 8049).